Consider the following 247-residue polypeptide: Adenosylcobinamide-GDP ribazoletransferase (247 aa).

Helical transmembrane passes span 34-54 (IITF…VFMV), 59-79 (CGVP…TGGF), 113-133 (GGLA…ELAL), and 194-214 (VLLP…AIFI).

It belongs to the CobS family. It depends on Mg(2+) as a cofactor.

It localises to the cell inner membrane. The enzyme catalyses alpha-ribazole + adenosylcob(III)inamide-GDP = adenosylcob(III)alamin + GMP + H(+). It catalyses the reaction alpha-ribazole 5'-phosphate + adenosylcob(III)inamide-GDP = adenosylcob(III)alamin 5'-phosphate + GMP + H(+). Its pathway is cofactor biosynthesis; adenosylcobalamin biosynthesis; adenosylcobalamin from cob(II)yrinate a,c-diamide: step 7/7. In terms of biological role, joins adenosylcobinamide-GDP and alpha-ribazole to generate adenosylcobalamin (Ado-cobalamin). Also synthesizes adenosylcobalamin 5'-phosphate from adenosylcobinamide-GDP and alpha-ribazole 5'-phosphate. The sequence is that of Adenosylcobinamide-GDP ribazoletransferase from Escherichia coli (strain ATCC 8739 / DSM 1576 / NBRC 3972 / NCIMB 8545 / WDCM 00012 / Crooks).